Here is a 64-residue protein sequence, read N- to C-terminus: MMLEPSIDSLQKRIKSKYSLVTLSARRARQLSETNQPLVEKSKSHKFVGMALEEIEAGKLYIEN.

Belongs to the RNA polymerase subunit omega family. In terms of assembly, the RNAP catalytic core consists of 2 alpha, 1 beta, 1 beta' and 1 omega subunit. When a sigma factor is associated with the core the holoenzyme is formed, which can initiate transcription.

It catalyses the reaction RNA(n) + a ribonucleoside 5'-triphosphate = RNA(n+1) + diphosphate. Its function is as follows. Promotes RNA polymerase assembly. Latches the N- and C-terminal regions of the beta' subunit thereby facilitating its interaction with the beta and alpha subunits. In Oceanobacillus iheyensis (strain DSM 14371 / CIP 107618 / JCM 11309 / KCTC 3954 / HTE831), this protein is DNA-directed RNA polymerase subunit omega.